The chain runs to 211 residues: Large ribosomal subunit protein uL3 (211 aa).

It belongs to the universal ribosomal protein uL3 family. Part of the 50S ribosomal subunit. Forms a cluster with proteins L14 and L19.

In terms of biological role, one of the primary rRNA binding proteins, it binds directly near the 3'-end of the 23S rRNA, where it nucleates assembly of the 50S subunit. The polypeptide is Large ribosomal subunit protein uL3 (Halothermothrix orenii (strain H 168 / OCM 544 / DSM 9562)).